Consider the following 347-residue polypeptide: Core-capsid bridging protein (347 aa).

The tract at residues 290–320 is disordered; that stretch reads GYRGTTFQRRATAPSRRRGPSRRRRRRKATL. Residues 304 to 318 show a composition bias toward basic residues; the sequence is SRRRGPSRRRRRRKA.

The protein belongs to the adenoviridae core-capsid bridging protein family. Monomer. Homodimer. Exists in equilibrium between monomers and dimers in solution. Interacts with the histone-like nucleoprotein; this interactions bridge the virus core to the capsid. Interacts with core protein X; this interactions bridge the virus core to the capsid. Interacts with the endosome lysis protein VI; this interactions bridge the virus core to the capsid. Interacts with the peripentonal hexons. Interacts with host NPM1; this interaction might play a role in virus assembly.

It is found in the virion. The protein resides in the host nucleus. It localises to the host nucleolus. Its function is as follows. Associates loosely with the viral DNA to form an outer shell around the nucleoprotein-DNA complex and links it with the capsid by binding the endosome lysis protein. Dissociates from the viral genome during entry. Might be involved in nuclear capsid assembly of the viral particles through its association with NPM1/nucleophosmin. In Homo sapiens (Human), this protein is Core-capsid bridging protein.